Reading from the N-terminus, the 900-residue chain is Translation initiation factor IF-2 (900 aa).

Basic and acidic residues-rich tracts occupy residues 119–158, 165–191, and 198–229; these read AAKA…EKQE, ADEK…KADA, and EEAR…DHHV. Residues 119–306 form a disordered region; sequence AAKAEAEAKA…NARSVAPESM (188 aa). Residues 257 to 272 show a composition bias toward low complexity; that stretch reads SANAGNNANSNSNAGS. Residues 400–569 enclose the tr-type G domain; the sequence is PRAPVVTIMG…LLESEVLELK (170 aa). Positions 409–416 are G1; that stretch reads GHVDHGKT. Residue 409-416 participates in GTP binding; sequence GHVDHGKT. Residues 434–438 are G2; that stretch reads GITQH. A G3 region spans residues 455-458; the sequence is DTPG. GTP is bound by residues 455–459 and 509–512; these read DTPGH and NKID. The G4 stretch occupies residues 509–512; it reads NKID. Residues 545 to 547 form a G5 region; the sequence is SAK.

Belongs to the TRAFAC class translation factor GTPase superfamily. Classic translation factor GTPase family. IF-2 subfamily.

The protein localises to the cytoplasm. Functionally, one of the essential components for the initiation of protein synthesis. Protects formylmethionyl-tRNA from spontaneous hydrolysis and promotes its binding to the 30S ribosomal subunits. Also involved in the hydrolysis of GTP during the formation of the 70S ribosomal complex. This Shewanella piezotolerans (strain WP3 / JCM 13877) protein is Translation initiation factor IF-2.